The sequence spans 376 residues: Protein-glutamate methylesterase/protein-glutamine glutaminase (376 aa).

Positions 5–122 (KVLIVDDSAL…QHTFEDYTDE (118 aa)) constitute a Response regulatory domain. Asp-56 carries the 4-aspartylphosphate modification. The CheB-type methylesterase domain maps to 185-376 (SKPSHKVIAL…PEKILALIKK (192 aa)). Active-site residues include Ser-197, His-223, and Asp-319.

Belongs to the CheB family. In terms of processing, phosphorylated by CheA. Phosphorylation of the N-terminal regulatory domain activates the methylesterase activity.

It localises to the cytoplasm. The enzyme catalyses [protein]-L-glutamate 5-O-methyl ester + H2O = L-glutamyl-[protein] + methanol + H(+). It carries out the reaction L-glutaminyl-[protein] + H2O = L-glutamyl-[protein] + NH4(+). Involved in chemotaxis. Part of a chemotaxis signal transduction system that modulates chemotaxis in response to various stimuli. Catalyzes the demethylation of specific methylglutamate residues introduced into the chemoreceptors (methyl-accepting chemotaxis proteins or MCP) by CheR. Also mediates the irreversible deamidation of specific glutamine residues to glutamic acid. The sequence is that of Protein-glutamate methylesterase/protein-glutamine glutaminase from Hydrogenovibrio crunogenus (strain DSM 25203 / XCL-2) (Thiomicrospira crunogena).